Here is a 407-residue protein sequence, read N- to C-terminus: Serine/threonine transporter SstT (407 aa).

A run of 9 helical transmembrane segments spans residues 14–34 (GSLV…ATVS), 48–68 (FVGA…AASI), 82–102 (IVIL…LMSF), 141–161 (AVLT…GLAL), 192–212 (IGIF…AIAG), 216–236 (LLLV…PAIV), 290–310 (IPLG…ILTL), 316–336 (MGIQ…GVSA), and 363–383 (VAMQ…SAET).

The protein belongs to the dicarboxylate/amino acid:cation symporter (DAACS) (TC 2.A.23) family.

It is found in the cell inner membrane. The enzyme catalyses L-serine(in) + Na(+)(in) = L-serine(out) + Na(+)(out). It carries out the reaction L-threonine(in) + Na(+)(in) = L-threonine(out) + Na(+)(out). Functionally, involved in the import of serine and threonine into the cell, with the concomitant import of sodium (symport system). The protein is Serine/threonine transporter SstT of Shewanella halifaxensis (strain HAW-EB4).